Here is a 612-residue protein sequence, read N- to C-terminus: UvrABC system protein C (612 aa).

In terms of domain architecture, GIY-YIG spans 20–98 (THSGVYRMLD…IKQHRPKYNI (79 aa)). In terms of domain architecture, UVR spans 208–243 (SSVLEEISAKMYQASEDMEYEKAQVYRDQLVVLRKL).

It belongs to the UvrC family. In terms of assembly, interacts with UvrB in an incision complex.

It localises to the cytoplasm. In terms of biological role, the UvrABC repair system catalyzes the recognition and processing of DNA lesions. UvrC both incises the 5' and 3' sides of the lesion. The N-terminal half is responsible for the 3' incision and the C-terminal half is responsible for the 5' incision. This Francisella tularensis subsp. holarctica (strain FTNF002-00 / FTA) protein is UvrABC system protein C.